Here is a 138-residue protein sequence, read N- to C-terminus: Large ribosomal subunit protein uL16 (138 aa).

Residues 1–19 (MLIPRKVAHRKQHHPKRTG) are compositionally biased toward basic residues. Residues 1–22 (MLIPRKVAHRKQHHPKRTGAAK) are disordered.

The protein belongs to the universal ribosomal protein uL16 family. Part of the 50S ribosomal subunit.

In terms of biological role, binds 23S rRNA and is also seen to make contacts with the A and possibly P site tRNAs. The protein is Large ribosomal subunit protein uL16 of Parafrankia sp. (strain EAN1pec).